A 102-amino-acid polypeptide reads, in one-letter code: MAKGQSLQDPFLNALRRERVPVSIYLVNGIKLQGQIESFDQFVILLKNTVSQMVYKHAISTVVPSRPVSHHSNNAGGGSSNYHHGGSAQGSSAPQQDSDDAE.

The 60-residue stretch at 9–68 folds into the Sm domain; it reads DPFLNALRRERVPVSIYLVNGIKLQGQIESFDQFVILLKNTVSQMVYKHAISTVVPSRPV. The disordered stretch occupies residues 63–102; that stretch reads VPSRPVSHHSNNAGGGSSNYHHGGSAQGSSAPQQDSDDAE. Residues 70-86 show a composition bias toward low complexity; sequence HHSNNAGGGSSNYHHGG.

Belongs to the Hfq family. As to quaternary structure, homohexamer.

Functionally, RNA chaperone that binds small regulatory RNA (sRNAs) and mRNAs to facilitate mRNA translational regulation in response to envelope stress, environmental stress and changes in metabolite concentrations. Also binds with high specificity to tRNAs. In Klebsiella pneumoniae (strain 342), this protein is RNA-binding protein Hfq.